The primary structure comprises 131 residues: Small ribosomal subunit protein uS8 (131 aa).

The protein belongs to the universal ribosomal protein uS8 family. Part of the 30S ribosomal subunit. Contacts proteins S5 and S12.

Functionally, one of the primary rRNA binding proteins, it binds directly to 16S rRNA central domain where it helps coordinate assembly of the platform of the 30S subunit. In Paraburkholderia phymatum (strain DSM 17167 / CIP 108236 / LMG 21445 / STM815) (Burkholderia phymatum), this protein is Small ribosomal subunit protein uS8.